A 33-amino-acid chain; its full sequence is Mu-theraphotoxin-Osp1a (33 aa).

Cystine bridges form between cysteine 2–cysteine 17, cysteine 9–cysteine 22, and cysteine 16–cysteine 29.

Belongs to the neurotoxin 10 (Hwtx-1) family. Expressed by the venom gland.

It is found in the secreted. Functionally, voltage-gated sodium channel Nav1.7/SCN9A inhibitor. The sequence is that of Mu-theraphotoxin-Osp1a from Orphnaecus sp. (strain Sibaliw/Philippines) (Tarantula spider).